A 1332-amino-acid polypeptide reads, in one-letter code: Aldehyde oxidase 1 (1332 aa).

A 2Fe-2S ferredoxin-type domain is found at 4–91 (STLYFYVNGR…GAAVTTVEGV (88 aa)). Positions 43, 48, 51, and 73 each coordinate [2Fe-2S] cluster. Residue Gln112 participates in Mo-molybdopterin binding. Positions 113, 116, 148, and 150 each coordinate [2Fe-2S] cluster. Cys150 is a binding site for Mo-molybdopterin. Positions 234-419 (FTGDRVTWIS…LSVTIPYSRK (186 aa)) constitute an FAD-binding PCMH-type domain. FAD is bound by residues 262 to 269 (VVMGNTSV), Ala343, Ser352, His356, Asp365, and Leu409. Mo-molybdopterin-binding positions include 800–801 (AF), Met1041, 1082–1085 (GSVV), Gln1197, and Leu1262. The active-site Proton acceptor; for azaheterocycle hydroxylase activity is Glu1264.

Belongs to the xanthine dehydrogenase family. Homodimer. Requires [2Fe-2S] cluster as cofactor. It depends on FAD as a cofactor. The cofactor is Mo-molybdopterin. In terms of tissue distribution, expressed in liver.

It is found in the cytoplasm. It carries out the reaction an aldehyde + O2 + H2O = a carboxylate + H2O2 + H(+). The catalysed reaction is retinal + O2 + H2O = retinoate + H2O2 + H(+). Its activity is regulated as follows. Inhibited by menadione and isovanillin. Not inhibited by allopurinol, a xanthine dehydrogenase potent inhibitor. Oxidase with broad substrate specificity, oxidizing aromatic azaheterocycles, such as N1-methylnicotinamide, N-methylphthalazinium and phthalazine, as well as aldehydes, such as benzaldehyde, retinal, pyridoxal, and vanillin. Plays a key role in the metabolism of xenobiotics and drugs containing aromatic azaheterocyclic substituents. Participates in the bioactivation of prodrugs such as famciclovir, catalyzing the oxidation step from 6-deoxypenciclovir to penciclovir, which is a potent antiviral agent. Is probably involved in the regulation of reactive oxygen species homeostasis. May be a prominent source of superoxide generation via the one-electron reduction of molecular oxygen. May also catalyze nitric oxide (NO) production via the reduction of nitrite to NO with NADH or aldehyde as electron donor. May play a role in adipogenesis. The polypeptide is Aldehyde oxidase 1 (Cavia porcellus (Guinea pig)).